Here is a 267-residue protein sequence, read N- to C-terminus: Cell division protein FtsQ (267 aa).

Over M1–A32 the chain is Cytoplasmic. A helical membrane pass occupies residues I33–F53. Topologically, residues T54 to Y267 are periplasmic. Positions F73–R141 constitute a POTRA domain.

The protein belongs to the FtsQ/DivIB family. FtsQ subfamily.

It is found in the cell inner membrane. Essential cell division protein. The polypeptide is Cell division protein FtsQ (Rickettsia prowazekii (strain Madrid E)).